The following is a 150-amino-acid chain: uncharacterized protein (150 aa).

This is an uncharacterized protein from Acidianus filamentous virus 1 (isolate United States/Yellowstone) (AFV-1).